Here is a 1018-residue protein sequence, read N- to C-terminus: Unconventional myosin-Ig (1018 aa).

Met-1 carries the N-acetylmethionine modification. A Myosin motor domain is found at 9 to 707; it reads YGKPDFVLLD…TLVTLEQSRA (699 aa). 102-109 contacts ATP; the sequence is GESGAGKT. An actin-binding region spans residues 584–606; the sequence is MVALVENLASKEPFYVRCIKPNE. One can recognise an IQ domain in the interval 710–739; the sequence is IPIIVLLLQKAWRGTLARWRCRRLRAIYTI. Positions 824-1017 constitute a TH1 domain; that stretch reads GLRQDWGCRR…RGSFTLLWPS (194 aa).

Belongs to the TRAFAC class myosin-kinesin ATPase superfamily. Myosin family. As to quaternary structure, interacts with calmodulin; via its IQ motifs. In terms of tissue distribution, specifically expressed in hematopoietic cells.

Its subcellular location is the cell membrane. It is found in the cell projection. The protein resides in the phagocytic cup. In terms of biological role, unconventional myosin required during immune response for detection of rare antigen-presenting cells by regulating T-cell migration. Unconventional myosins are actin-based motor molecules with ATPase activity and serve in intracellular movements. Acts as a regulator of T-cell migration by generating membrane tension, enforcing cell-intrinsic meandering search, thereby enhancing detection of rare antigens during lymph-node surveillance, enabling pathogen eradication. Also required in B-cells, where it regulates different membrane/cytoskeleton-dependent processes. Involved in Fc-gamma receptor (Fc-gamma-R) phagocytosis. Its function is as follows. Constitutes the minor histocompatibility antigen HA-2. More generally, minor histocompatibility antigens (mHags) refer to immunogenic peptide which, when complexed with MHC, can generate an immune response after recognition by specific T-cells. The peptides are derived from polymorphic intracellular proteins, which are cleaved by normal pathways of antigen processing. The binding of these peptides to MHC class I or class II molecules and their expression on the cell surface can stimulate T-cell responses and thereby trigger graft rejection or graft-versus-host disease (GVHD) after hematopoietic stem cell transplantation from HLA-identical sibling donor. GVHD is a frequent complication after bone marrow transplantation (BMT), due to mismatch of minor histocompatibility antigen in HLA-matched sibling marrow transplants. HA-2 is restricted to MHC class I HLA-A*0201. In Homo sapiens (Human), this protein is Unconventional myosin-Ig (MYO1G).